Here is a 1385-residue protein sequence, read N- to C-terminus: Defecation cycle abnormal dec-7 (1385 aa).

A signal peptide spans 1–19; it reads MWTARHAVALLVVLTYAYS. Asn-156 carries N-linked (GlcNAc...) asparagine glycosylation. The tract at residues 234-262 is disordered; the sequence is SQTNYGAPNYQQAGAQSAANQQFSNPSQY. Residues 242 to 261 are compositionally biased toward low complexity; sequence NYQQAGAQSAANQQFSNPSQ. The 166-residue stretch at 285–450 folds into the NIDO domain; the sequence is QIYGKRKKRQ…GRWIHRVDEV (166 aa). Asn-313, Asn-386, Asn-413, Asn-458, Asn-480, Asn-562, and Asn-583 each carry an N-linked (GlcNAc...) asparagine glycan. An AMOP domain is found at 681 to 840; it reads GRNWPIDMCI…DHCEFYYWRR (160 aa). In terms of domain architecture, VWFD spans 852–1088; sequence AAGYIYGEPH…FWKIDGTNDK (237 aa). Asn-909, Asn-921, Asn-975, Asn-1009, and Asn-1124 each carry an N-linked (GlcNAc...) asparagine glycan. A Sushi domain is found at 1179–1238; it reads ISCGPLLKKEGVVKTPPAANYLDGDKVVFSCKPKYYIHGDIERVCRNGTWSPGWWAWCRD. 2 disulfides stabilise this stretch: Cys-1181/Cys-1223 and Cys-1209/Cys-1236. The N-linked (GlcNAc...) asparagine glycan is linked to Asn-1225. Residues 1251–1271 form a helical membrane-spanning segment; the sequence is LLSIFGISLIFVIFFCILWNI. Residues 1321 to 1385 are disordered; that stretch reads MNQPSRPIPS…GNMRFETSAI (65 aa).

As to expression, highly expressed in the intestinal epithelia.

It localises to the membrane. The protein resides in the cell junction. In terms of biological role, may negatively regulate activity of innexin gap junction protein inx-16, thereby mediating the rhythmic frequency of the defecation motor program. Required for the clustering of inx-16 to the cell-cell junction of the intestinal epithelia. Probably dispensable for intestinal integrity. May be a cytokine receptor. This chain is Defecation cycle abnormal dec-7, found in Caenorhabditis elegans.